Consider the following 310-residue polypeptide: ADP-L-glycero-D-manno-heptose-6-epimerase (310 aa).

NADP(+) is bound by residues Phe10 to Ile11, Asp31 to Asn32, Lys38, Lys53, Glu75 to Ser79, and Asn92. Tyr140 functions as the Proton acceptor in the catalytic mechanism. Position 144 (Lys144) interacts with NADP(+). Asn169 serves as a coordination point for substrate. 2 residues coordinate NADP(+): Val170 and Lys178. Lys178 functions as the Proton acceptor in the catalytic mechanism. Substrate-binding positions include Ser180, His187, Phe201–Ser204, Arg209, and Tyr272.

This sequence belongs to the NAD(P)-dependent epimerase/dehydratase family. HldD subfamily. As to quaternary structure, homopentamer. NADP(+) serves as cofactor.

It catalyses the reaction ADP-D-glycero-beta-D-manno-heptose = ADP-L-glycero-beta-D-manno-heptose. Its pathway is nucleotide-sugar biosynthesis; ADP-L-glycero-beta-D-manno-heptose biosynthesis; ADP-L-glycero-beta-D-manno-heptose from D-glycero-beta-D-manno-heptose 7-phosphate: step 4/4. In terms of biological role, catalyzes the interconversion between ADP-D-glycero-beta-D-manno-heptose and ADP-L-glycero-beta-D-manno-heptose via an epimerization at carbon 6 of the heptose. The sequence is that of ADP-L-glycero-D-manno-heptose-6-epimerase from Salmonella dublin (strain CT_02021853).